The primary structure comprises 177 residues: Protein GrpE (177 aa).

2 stretches are compositionally biased toward basic and acidic residues: residues Met-1–Val-19 and Ser-29–Arg-41. The disordered stretch occupies residues Met-1–Arg-41.

This sequence belongs to the GrpE family. Homodimer.

The protein resides in the cytoplasm. In terms of biological role, participates actively in the response to hyperosmotic and heat shock by preventing the aggregation of stress-denatured proteins, in association with DnaK and GrpE. It is the nucleotide exchange factor for DnaK and may function as a thermosensor. Unfolded proteins bind initially to DnaJ; upon interaction with the DnaJ-bound protein, DnaK hydrolyzes its bound ATP, resulting in the formation of a stable complex. GrpE releases ADP from DnaK; ATP binding to DnaK triggers the release of the substrate protein, thus completing the reaction cycle. Several rounds of ATP-dependent interactions between DnaJ, DnaK and GrpE are required for fully efficient folding. In Streptococcus gordonii (strain Challis / ATCC 35105 / BCRC 15272 / CH1 / DL1 / V288), this protein is Protein GrpE.